Reading from the N-terminus, the 86-residue chain is Large ribosomal subunit protein bL27 (86 aa).

The segment at 1–26 (MASKKAGGSTKNGRDSQSKRLGVKRF) is disordered.

It belongs to the bacterial ribosomal protein bL27 family.

This chain is Large ribosomal subunit protein bL27, found in Bdellovibrio bacteriovorus (strain ATCC 15356 / DSM 50701 / NCIMB 9529 / HD100).